A 357-amino-acid chain; its full sequence is Glucose-6-phosphatase catalytic subunit 1 (357 aa).

Topologically, residues 1–28 (MEKGMNVLHDFGIQSTHYLQVNYQNSQD) are lumenal. Residues 29–49 (WFILVSVIADLRNAFYVLFPI) form a helical membrane-spanning segment. Over 50 to 60 (WFHLREAVGIK) the chain is Cytoplasmic. The chain crosses the membrane as a helical span at residues 61 to 81 (LLWVAVIGDWLNLVFKWILFG). Topologically, residues 82-117 (QRPYWWVLDTDYYSNTSAPLIKQFPVTCETGPGSPS) are lumenal. Arg-83 lines the substrate pocket. Asn-96 is a glycosylation site (N-linked (GlcNAc...) asparagine). The helical transmembrane segment at 118–138 (GHAMGTAGVYYVMVTSTLSIF) threads the bilayer. His-119 (proton donor) is an active-site residue. Over 139-147 (RGKKKPTYR) the chain is Cytoplasmic. The chain crosses the membrane as a helical span at residues 148 to 168 (FRCLNVMLWLGFWVVQLNVCL). Residues 169–170 (SR) are Lumenal-facing. Arg-170 contributes to the substrate binding site. Residues 171-191 (IYLAAHFPHQVVAGVLSGIAV) traverse the membrane as a helical segment. The active-site Nucleophile is His-176. Residues 192 to 209 (AETFRHIQSIYNASLKKY) lie on the Cytoplasmic side of the membrane. The helical transmembrane segment at 210–230 (FLITCFLFSFAIGFYLLLKWL) threads the bilayer. Over 231–254 (GVDLLWTLEKAKRRCERPEWVHID) the chain is Lumenal. Residues 255 to 275 (TTPFASLLKNLGTLFGLGLAL) traverse the membrane as a helical segment. The Cytoplasmic segment spans residues 276 to 291 (NSSMYRESCKGKLSKW). A helical transmembrane segment spans residues 292 to 312 (FPFRLSCIVASLVLLHLFDSL). At 313-320 (KPPSQIEL) the chain is on the lumenal side. Residues 321–341 (IFYVLSFCKSAAVPLASVSLI) traverse the membrane as a helical segment. The Cytoplasmic portion of the chain corresponds to 342-357 (PYCLAWVLGQPNKKTV). The Prevents secretion from ER motif lies at 354–357 (KKTV).

This sequence belongs to the glucose-6-phosphatase family.

Its subcellular location is the endoplasmic reticulum membrane. The enzyme catalyses D-glucose 6-phosphate + H2O = D-glucose + phosphate. It functions in the pathway carbohydrate biosynthesis; gluconeogenesis. Hydrolyzes glucose-6-phosphate to glucose in the endoplasmic reticulum. Forms with the glucose-6-phosphate transporter (SLC37A4/G6PT) the complex responsible for glucose production in the terminal step of glycogenolysis and gluconeogenesis. Hence, it is the key enzyme in homeostatic regulation of blood glucose levels. This chain is Glucose-6-phosphatase catalytic subunit 1 (G6PC1), found in Bos taurus (Bovine).